A 693-amino-acid polypeptide reads, in one-letter code: MWVSIFNLKSSGLNHFCTRTKAFRYFWCRTFSLASLSENNSRFQTDSSRLPYSGSRYYHSSSKHFGEDFVSILKNIDVPRDCVETIRNVLVKHNWIQKYESGFSTELDQYTVIRILDDLFEETLDASIVLYFFRWSELWIGVEHSSRSISRMIHILVSGNMNYRAVDMLLCLVKKCSGEERSLCLVMKDLFETRIDRRVLETVFSILIDCCIRERKVNMALKLTYKVDQFGIFPSRGVCISLLKEILRVHGLELAREFVEHMLSRGRHLNAAVLSLFIRKYCSDGYFDKGWELLMGMKHYGIRPDIVAFTVFIDKLCKAGFLKEATSVLFKLKLFGISQDSVSVSSVIDGFCKVGKPEEAIKLIHSFRLRPNIFVYSSFLSNICSTGDMLRASTIFQEIFELGLLPDCVCYTTMIDGYCNLGRTDKAFQYFGALLKSGNPPSLTTSTILIGACSRFGSISDAESVFRNMKTEGLKLDVVTYNNLMHGYGKTHQLNKVFELIDEMRSAGISPDVATYNILIHSMVVRGYIDEANEIISELIRRGFVPSTLAFTDVIGGFSKRGDFQEAFILWFYMADLRMKPDVVTCSALLHGYCKAQRMEKAIVLFNKLLDAGLKPDVVLYNTLIHGYCSVGDIEKACELIGLMVQRGMLPNESTHHALVLGLEGKRFVNSETHASMLLEEIIVAKWHLTSGG.

PPR repeat units lie at residues 200-234, 235-269, 270-304, 305-339, 340-370, 372-406, 407-441, 442-476, 477-511, 512-546, 547-581, 582-616, and 617-651; these read LETVFSILIDCCIRERKVNMALKLTYKVDQFGIFP, SRGVCISLLKEILRVHGLELAREFVEHMLSRGRHL, NAAVLSLFIRKYCSDGYFDKGWELLMGMKHYGIRP, DIVAFTVFIDKLCKAGFLKEATSVLFKLKLFGISQ, DSVSVSSVIDGFCKVGKPEEAIKLIHSFRLR, NIFVYSSFLSNICSTGDMLRASTIFQEIFELGLLP, DCVCYTTMIDGYCNLGRTDKAFQYFGALLKSGNPP, SLTTSTILIGACSRFGSISDAESVFRNMKTEGLKL, DVVTYNNLMHGYGKTHQLNKVFELIDEMRSAGISP, DVATYNILIHSMVVRGYIDEANEIISELIRRGFVP, STLAFTDVIGGFSKRGDFQEAFILWFYMADLRMKP, DVVTCSALLHGYCKAQRMEKAIVLFNKLLDAGLKP, and DVVLYNTLIHGYCSVGDIEKACELIGLMVQRGMLP.

Belongs to the PPR family. P subfamily.

This Arabidopsis thaliana (Mouse-ear cress) protein is Pentatricopeptide repeat-containing protein At2g19280.